The sequence spans 402 residues: Imidazolonepropionase (402 aa).

His66 and His68 together coordinate Fe(3+). Residues His66 and His68 each coordinate Zn(2+). Residues Arg75, Tyr138, and His171 each coordinate 4-imidazolone-5-propanoate. Tyr138 lines the N-formimidoyl-L-glutamate pocket. His236 contacts Fe(3+). His236 lines the Zn(2+) pocket. Position 239 (Gln239) interacts with 4-imidazolone-5-propanoate. Position 311 (Asp311) interacts with Fe(3+). Zn(2+) is bound at residue Asp311. Residues Asn313 and Gly315 each coordinate N-formimidoyl-L-glutamate. Residue Thr316 participates in 4-imidazolone-5-propanoate binding.

Belongs to the metallo-dependent hydrolases superfamily. HutI family. Zn(2+) serves as cofactor. The cofactor is Fe(3+).

The protein resides in the cytoplasm. The catalysed reaction is 4-imidazolone-5-propanoate + H2O = N-formimidoyl-L-glutamate. The protein operates within amino-acid degradation; L-histidine degradation into L-glutamate; N-formimidoyl-L-glutamate from L-histidine: step 3/3. Functionally, catalyzes the hydrolytic cleavage of the carbon-nitrogen bond in imidazolone-5-propanoate to yield N-formimidoyl-L-glutamate. It is the third step in the universal histidine degradation pathway. This is Imidazolonepropionase from Pseudomonas paraeruginosa (strain DSM 24068 / PA7) (Pseudomonas aeruginosa (strain PA7)).